A 323-amino-acid chain; its full sequence is rRNA 2'-O-methyltransferase fibrillarin (323 aa).

A disordered region spans residues 1-78 (MRPGFSPRGG…GGGRGGFGGG (78 aa)). 2 stretches are compositionally biased toward gly residues: residues 7-44 (PRGGRGGFGDRGGFGGRGGFGDRGGFRGGSRGGFGGRG) and 63-78 (GRGGPRGGGRGGFGGG). Asymmetric dimethylarginine occurs at positions 8, 17, 23, and 29. S-adenosyl-L-methionine-binding positions include 174–175 (TT), 193–194 (EF), 218–219 (DA), and 238–241 (DVAQ). Residues 276–308 (APEAVFAAEVKKMQQENMKPQEQLTLEPYERDH) are helical.

This sequence belongs to the methyltransferase superfamily. Fibrillarin family. Component of box C/D small nucleolar ribonucleoprotein (snoRNP) particles. Part of the small subunit (SSU) processome, composed of more than 70 proteins and the RNA chaperone small nucleolar RNA (snoRNA) U3. Post-translationally, by homology to other fibrillarins, some or all of the N-terminal domain arginines are modified to asymmetric dimethylarginine (DMA).

It localises to the nucleus. Its subcellular location is the nucleolus. The protein resides in the nucleoplasm. It catalyses the reaction L-glutaminyl-[histone H2A] + S-adenosyl-L-methionine = N(5)-methyl-L-glutaminyl-[histone H2A] + S-adenosyl-L-homocysteine + H(+). The enzyme catalyses a ribonucleotide in rRNA + S-adenosyl-L-methionine = a 2'-O-methylribonucleotide in rRNA + S-adenosyl-L-homocysteine + H(+). It carries out the reaction a ribonucleotide in U6 snRNA + S-adenosyl-L-methionine = a 2'-O-methylribonucleotide in U6 snRNA + S-adenosyl-L-homocysteine + H(+). S-adenosyl-L-methionine-dependent methyltransferase that has the ability to methylate both RNAs and proteins. Involved in pre-rRNA processing by catalyzing the site-specific 2'-hydroxyl methylation of ribose moieties in pre-ribosomal RNA. Probably catalyzes 2'-O-methylation of U6 snRNAs in box C/D RNP complexes. U6 snRNA 2'-O-methylation is required for mRNA splicing fidelity. Also acts as a protein methyltransferase by mediating methylation of 'Gln-105' of histone H2A (H2AQ104me), a modification that impairs binding of the FACT complex and is specifically present at 35S ribosomal DNA locus. Part of the small subunit (SSU) processome, first precursor of the small eukaryotic ribosomal subunit. During the assembly of the SSU processome in the nucleolus, many ribosome biogenesis factors, an RNA chaperone and ribosomal proteins associate with the nascent pre-rRNA and work in concert to generate RNA folding, modifications, rearrangements and cleavage as well as targeted degradation of pre-ribosomal RNA by the RNA exosome. This chain is rRNA 2'-O-methyltransferase fibrillarin (fbl), found in Xenopus laevis (African clawed frog).